The following is a 1032-amino-acid chain: MTRIRRSPCLLLLIIWFMCIAGSVQVVQSQNQTGATTHPDEARALNSIFAAWKIQAPREWNISGELCSGAAIDASVLDSNPAYNPLIKCDCSFQNSTICRITNIKVYAIDVVGPIPPELWTLTYLTNLNLGQNVLTGSLPPAIGNLTRMQWMTFGINALSGPVPKEIGLLTDLRLLGISSNNFSGSIPDEIGRCTKLQQMYIDSSGLSGRIPLSFANLVQLEQAWIADLEVTDQIPDFIGDWTKLTTLRIIGTGLSGPIPSSFSNLTSLTELRLGDISSGSSSLDFIKDMKSLSVLVLRNNNLTGTIPSTIGEHSSLRQVDLSFNKLHGPIPASLFNLSQLTHLFLGNNTLNGSFPTQKTQSLRNVDVSYNDLSGSLPSWVSLPSLKLNLVANNFTLEGLDNRVLPGLNCLQKNFPCNRGKGIYSDFSINCGGPEKRSVTGALFEREDEDFGPASFFVSAGQRWAASSVGLFAGSSNNIYIATSQSQFVNTLDSELFQSARLSASSVRYYGLGLENGGYTVTLQFAEIQILGSTSTTWKGLGRRRFDIYVQGRLVEKDFDVRRTAGDSTVRAVQRVYKANVSENHLEVHLFWAGKGTCCIPIQGAYGPLISAVSATPDFTPTVANKPPSKGKNRTGTIVGVIVGVGLLSILAGVVMFTIRKRRKRYTDDEELLGMDVKPYIFTYSELKSATQDFDPSNKLGEGGFGPVYKGNLNDGRVVAVKLLSVGSRQGKGQFVAEIVAISSVLHRNLVKLYGCCFEGEHRMLVYEYLPNGSLDQALFGDKTLHLDWSTRYEICLGVARGLVYLHEEASVRIVHRDVKASNILLDSRLVPQISDFGLAKLYDDKKTHISTRVAGTIGYLAPEYAMRGHLTEKTDVYAFGVVALELVSGRPNSDENLEEEKKYLLEWAWNLHEKSRDIELIDDKLTDFNMEEAKRMIGIALLCTQTSHALRPPMSRVVAMLSGDVEIGDVTSKPGYVSDWRFDDTTGSSLSGFQIKDTTGYSMSLVAPGSEISPRDSDFKPMLGSKINEGR.

Residues 1–29 (MTRIRRSPCLLLLIIWFMCIAGSVQVVQS) form the signal peptide. At 30–636 (QNQTGATTHP…PPSKGKNRTG (607 aa)) the chain is on the extracellular side. 3 N-linked (GlcNAc...) asparagine glycosylation sites follow: Asn-31, Asn-61, and Asn-95. LRR repeat units lie at residues 101-122 (ITNIKVYAIDVVGPIPPELWTL), 123-146 (TYLTNLNLGQNVLTGSLPPAIGNL), 148-170 (RMQWMTFGINALSGPVPKEIGLL), 171-194 (TDLRLLGISSNNFSGSIPDEIGRC), 196-217 (KLQQMYIDSSGLSGRIPLSFAN), 242-265 (WTKLTTLRIIGTGLSGPIPSSFSN), 290-314 (MKSLSVLVLRNNNLTGTIPSTIGEH), 315-338 (SSLRQVDLSFNKLHGPIPASLFNL), 340-360 (QLTHLFLGNNTLNGSFPTQKT), and 361-385 (QSLRNVDVSYNDLSGSLPSWVSLPS). A glycan (N-linked (GlcNAc...) asparagine) is linked at Asn-145. Asn-182 carries an N-linked (GlcNAc...) asparagine glycan. Residues Asn-265, Asn-302, Asn-337, Asn-348, and Asn-352 are each glycosylated (N-linked (GlcNAc...) asparagine). Asn-394, Asn-580, and Asn-633 each carry an N-linked (GlcNAc...) asparagine glycan. A helical membrane pass occupies residues 637–657 (TIVGVIVGVGLLSILAGVVMF). At 658–1032 (TIRKRRKRYT…MLGSKINEGR (375 aa)) the chain is on the cytoplasmic side. The residue at position 683 (Thr-683) is a Phosphothreonine. Residues 694 to 968 (FDPSNKLGEG…VAMLSGDVEI (275 aa)) form the Protein kinase domain. ATP-binding positions include 700-708 (LGEGGFGPV) and Lys-722. A Phosphotyrosine modification is found at Tyr-767. Asp-818 (proton acceptor) is an active-site residue. A phosphoserine mark is found at Ser-822 and Ser-851. Phosphothreonine is present on residues Thr-852 and Thr-857. Tyr-865 carries the post-translational modification Phosphotyrosine. A disordered region spans residues 1008–1032 (APGSEISPRDSDFKPMLGSKINEGR).

It belongs to the protein kinase superfamily. Ser/Thr protein kinase family.

The protein resides in the cell membrane. It catalyses the reaction L-seryl-[protein] + ATP = O-phospho-L-seryl-[protein] + ADP + H(+). The catalysed reaction is L-threonyl-[protein] + ATP = O-phospho-L-threonyl-[protein] + ADP + H(+). The polypeptide is Probable LRR receptor-like serine/threonine-protein kinase At1g56130 (Arabidopsis thaliana (Mouse-ear cress)).